A 221-amino-acid chain; its full sequence is Probable septum site-determining protein MinC (221 aa).

It belongs to the MinC family. As to quaternary structure, interacts with MinD and FtsZ.

Cell division inhibitor that blocks the formation of polar Z ring septums. Rapidly oscillates between the poles of the cell to destabilize FtsZ filaments that have formed before they mature into polar Z rings. Prevents FtsZ polymerization. The chain is Probable septum site-determining protein MinC from Aliivibrio fischeri (strain MJ11) (Vibrio fischeri).